The sequence spans 215 residues: Large ribosomal subunit protein eL15 (215 aa).

The interval 179–215 is disordered; sequence GTVKHKWKKKEKEREQKKRHEATKYYRLQNYDKLPGK. The segment covering 188 to 202 has biased composition (basic and acidic residues); that stretch reads KEKEREQKKRHEATK.

The protein belongs to the eukaryotic ribosomal protein eL15 family.

In Sulfurisphaera tokodaii (strain DSM 16993 / JCM 10545 / NBRC 100140 / 7) (Sulfolobus tokodaii), this protein is Large ribosomal subunit protein eL15.